A 104-amino-acid polypeptide reads, in one-letter code: Phosphoribosyl-ATP pyrophosphatase (104 aa).

The protein belongs to the PRA-PH family.

The protein resides in the cytoplasm. It carries out the reaction 1-(5-phospho-beta-D-ribosyl)-ATP + H2O = 1-(5-phospho-beta-D-ribosyl)-5'-AMP + diphosphate + H(+). It functions in the pathway amino-acid biosynthesis; L-histidine biosynthesis; L-histidine from 5-phospho-alpha-D-ribose 1-diphosphate: step 2/9. This chain is Phosphoribosyl-ATP pyrophosphatase, found in Nitrosococcus oceani (strain ATCC 19707 / BCRC 17464 / JCM 30415 / NCIMB 11848 / C-107).